Consider the following 110-residue polypeptide: UPF0060 membrane protein Bamb_1160 (110 aa).

Helical transmembrane passes span 9–29 (ALFA…WLVL), 34–54 (PVWL…LLTL), 66–86 (YGGV…GVAL), and 88–108 (RWDA…ALQP).

Belongs to the UPF0060 family.

The protein localises to the cell inner membrane. This chain is UPF0060 membrane protein Bamb_1160, found in Burkholderia ambifaria (strain ATCC BAA-244 / DSM 16087 / CCUG 44356 / LMG 19182 / AMMD) (Burkholderia cepacia (strain AMMD)).